The following is a 300-amino-acid chain: Probable alpha-L-glutamate ligase (300 aa).

The ATP-grasp domain occupies 104–287; sequence LQLLARQGID…IAGRMIEYIE (184 aa). ATP contacts are provided by residues Lys-141, 178–179, Asp-187, and 211–213; these read EY and RSN. Positions 248, 260, and 262 each coordinate Mg(2+). Residues Asp-248, Glu-260, and Asn-262 each contribute to the Mn(2+) site.

Belongs to the RimK family. Requires Mg(2+) as cofactor. It depends on Mn(2+) as a cofactor.

The polypeptide is Probable alpha-L-glutamate ligase (Serratia proteamaculans (strain 568)).